The following is a 428-amino-acid chain: C4-dicarboxylate transport protein (428 aa).

Helical transmembrane passes span 8 to 28 (VLYVQVIFAIVVGVILGHYYP), 44 to 64 (LIKMVIGPIIFCTVVTGIAGM), 78 to 98 (LLYFEIVSTCALVLGLAATHI), 148 to 168 (GEILQILLIALLFGSVLAHLG), 184 to 204 (VLFGIVHIVTKLAPIGAFGAM), 222 to 242 (LIGTFYLTSVVFVLVVLGAIA), 307 to 327 (IYMTMAVLFIAQATNIELTWM), and 355 to 375 (AATLAVVPTIPLSGMVLILGI).

The protein belongs to the dicarboxylate/amino acid:cation symporter (DAACS) (TC 2.A.23) family.

The protein localises to the cell inner membrane. Its function is as follows. Responsible for the transport of dicarboxylates such as succinate, fumarate, and malate from the periplasm across the membrane. The sequence is that of C4-dicarboxylate transport protein from Burkholderia pseudomallei (strain 1106a).